A 1455-amino-acid polypeptide reads, in one-letter code: Nik-related protein kinase (1455 aa).

A Protein kinase domain is found at 25–313 (FSLDKAIGLG…SGNMLLHPFV (289 aa)). Residues 31–39 (IGLGTYGRI) and K54 contribute to the ATP site. D177 acts as the Proton acceptor in catalysis. Disordered stretches follow at residues 385-404 (LHGE…PQDQ) and 471-568 (TQDN…EDKE). Polar residues predominate over residues 471–480 (TQDNKATSPE). The span at 494–505 (EALETEQPKDLD) shows a compositional bias: basic and acidic residues. Residues 520–531 (QPRQGQAAEQQQ) are compositionally biased toward low complexity. A compositionally biased stretch (acidic residues) spans 540–568 (PPEEDREPEQAEVQEEAVEPPQAEIEDKE). Positions 716–750 (RRRHRRWEDIFNQHEEQLRRVENDREDDSSDNDEV) form a coiled coil. Disordered stretches follow at residues 760 to 854 (IEPH…PPYS) and 1029 to 1080 (AFGN…TETS). Phosphoserine is present on residues S847 and S850. Over residues 1029–1038 (AFGNHGANRG) the composition is skewed to low complexity. The span at 1044–1078 (RNREANGRNEENGAFGRDQHVFPEFEHEESDRGTE) shows a compositional bias: basic and acidic residues. The region spanning 1138–1425 (SSEVYCGSLW…RFLCARGDKM (288 aa)) is the CNH domain.

It belongs to the protein kinase superfamily. STE Ser/Thr protein kinase family. STE20 subfamily.

The catalysed reaction is L-seryl-[protein] + ATP = O-phospho-L-seryl-[protein] + ADP + H(+). It catalyses the reaction L-threonyl-[protein] + ATP = O-phospho-L-threonyl-[protein] + ADP + H(+). May phosphorylate cofilin-1 and induce actin polymerization through this process, during the late stages of embryogenesis. Involved in the TNF-alpha-induced signaling pathway. This is Nik-related protein kinase (Nrk) from Mus musculus (Mouse).